Consider the following 242-residue polypeptide: Ubiquinone biosynthesis O-methyltransferase (242 aa).

The S-adenosyl-L-methionine site is built by R44, G64, D85, and M129.

This sequence belongs to the methyltransferase superfamily. UbiG/COQ3 family.

It carries out the reaction a 3-demethylubiquinol + S-adenosyl-L-methionine = a ubiquinol + S-adenosyl-L-homocysteine + H(+). The enzyme catalyses a 3-(all-trans-polyprenyl)benzene-1,2-diol + S-adenosyl-L-methionine = a 2-methoxy-6-(all-trans-polyprenyl)phenol + S-adenosyl-L-homocysteine + H(+). Its pathway is cofactor biosynthesis; ubiquinone biosynthesis. Functionally, O-methyltransferase that catalyzes the 2 O-methylation steps in the ubiquinone biosynthetic pathway. This is Ubiquinone biosynthesis O-methyltransferase from Citrobacter koseri (strain ATCC BAA-895 / CDC 4225-83 / SGSC4696).